The following is a 297-amino-acid chain: ATP phosphoribosyltransferase (297 aa).

N-acetylmethionine is present on Met1.

The protein belongs to the ATP phosphoribosyltransferase family.

Its subcellular location is the cytoplasm. The catalysed reaction is 1-(5-phospho-beta-D-ribosyl)-ATP + diphosphate = 5-phospho-alpha-D-ribose 1-diphosphate + ATP. Its pathway is amino-acid biosynthesis; L-histidine biosynthesis; L-histidine from 5-phospho-alpha-D-ribose 1-diphosphate: step 1/9. Catalyzes the condensation of ATP and 5-phosphoribose 1-diphosphate to form N'-(5'-phosphoribosyl)-ATP (PR-ATP). Has a crucial role in the pathway because the rate of histidine biosynthesis seems to be controlled primarily by regulation of the enzymatic activity. This chain is ATP phosphoribosyltransferase (HIS1), found in Saccharomyces cerevisiae (strain ATCC 204508 / S288c) (Baker's yeast).